Reading from the N-terminus, the 109-residue chain is DNA-binding protein Mpal_0536 (109 aa).

The disordered stretch occupies residues 14–35 (MAQLQSQQMDQQQMDEEKQRAK). The span at 16-25 (QLQSQQMDQQ) shows a compositional bias: low complexity.

The protein belongs to the PDCD5 family.

This Methanosphaerula palustris (strain ATCC BAA-1556 / DSM 19958 / E1-9c) protein is DNA-binding protein Mpal_0536.